A 118-amino-acid chain; its full sequence is Protein Rev (118 aa).

The residue at position 5 (S5) is a Phosphoserine; by host CK2. A homomultimerization region spans residues 18 to 26 (LIKILYQSN). Positions 23-49 (YQSNPPPSPEGTRQARRNRRRRWRARQ) are disordered. The Nuclear localization signal and RNA-binding (RRE) signature appears at 34–50 (TRQARRNRRRRWRARQR). The segment covering 36–49 (QARRNRRRRWRARQ) has biased composition (basic residues). Residues 73–84 (LQLPPLERLNLN) carry the Nuclear export signal and binding to XPO1 motif. The tract at residues 89–118 (CGASGTQGVGSPQISVESPTVLESGTEEQC) is disordered. S92 and S99 each carry phosphoserine; by host. Polar residues predominate over residues 92 to 112 (SGTQGVGSPQISVESPTVLES).

Belongs to the HIV-1 REV protein family. In terms of assembly, homomultimer; when bound to the RRE. Multimeric assembly is essential for activity and may involve XPO1. Binds to human KPNB1, XPO1, TNPO1, RANBP5 and IPO7. Interacts with the viral Integrase. Interacts with human KHDRBS1. Interacts with human NAP1; this interaction decreases Rev multimerization and stimulates its activity. Interacts with human DEAD-box helicases DDX3 and DDX24; these interactions may serve for viral RNA export to the cytoplasm and packaging, respectively. Interacts with human PSIP1; this interaction may inhibit HIV-1 DNA integration by promoting dissociation of the Integrase-LEDGF/p75 complex. Post-translationally, asymmetrically arginine dimethylated at one site by host PRMT6. Methylation impairs the RNA-binding activity and export of viral RNA from the nucleus to the cytoplasm. Phosphorylated by protein kinase CK2. Presence of, and maybe binding to the N-terminus of the regulatory beta subunit of CK2 is necessary for CK2-mediated Rev's phosphorylation.

The protein resides in the host nucleus. It localises to the host nucleolus. The protein localises to the host cytoplasm. Functionally, escorts unspliced or incompletely spliced viral pre-mRNAs (late transcripts) out of the nucleus of infected cells. These pre-mRNAs carry a recognition sequence called Rev responsive element (RRE) located in the env gene, that is not present in fully spliced viral mRNAs (early transcripts). This function is essential since most viral proteins are translated from unspliced or partially spliced pre-mRNAs which cannot exit the nucleus by the pathway used by fully processed cellular mRNAs. Rev itself is translated from a fully spliced mRNA that readily exits the nucleus. Rev's nuclear localization signal (NLS) binds directly to KPNB1/Importin beta-1 without previous binding to KPNA1/Importin alpha-1. KPNB1 binds to the GDP bound form of RAN (Ran-GDP) and targets Rev to the nucleus. In the nucleus, the conversion from Ran-GDP to Ran-GTP dissociates Rev from KPNB1 and allows Rev's binding to the RRE in viral pre-mRNAs. Rev multimerization on the RRE via cooperative assembly exposes its nuclear export signal (NES) to the surface. Rev can then form a complex with XPO1/CRM1 and Ran-GTP, leading to nuclear export of the complex. Conversion from Ran-GTP to Ran-GDP mediates dissociation of the Rev/RRE/XPO1/RAN complex, so that Rev can return to the nucleus for a subsequent round of export. Beside KPNB1, also seems to interact with TNPO1/Transportin-1, RANBP5/IPO5 and IPO7/RANBP7 for nuclear import. The nucleoporin-like HRB/RIP is an essential cofactor that probably indirectly interacts with Rev to release HIV RNAs from the perinuclear region to the cytoplasm. The chain is Protein Rev from Human immunodeficiency virus type 1 group M subtype D (isolate Z2/CDC-Z34) (HIV-1).